The following is a 290-amino-acid chain: NH(3)-dependent NAD(+) synthetase (290 aa).

33–40 contacts ATP; the sequence is GVSGGVDS. Mg(2+) is bound at residue Asp39. Deamido-NAD(+) is bound at residue Arg154. Residue Thr174 participates in ATP binding. A Mg(2+)-binding site is contributed by Glu179. The deamido-NAD(+) site is built by Lys187 and Asp194. Positions 203 and 225 each coordinate ATP.

The protein belongs to the NAD synthetase family. As to quaternary structure, homodimer.

The enzyme catalyses deamido-NAD(+) + NH4(+) + ATP = AMP + diphosphate + NAD(+) + H(+). It participates in cofactor biosynthesis; NAD(+) biosynthesis; NAD(+) from deamido-NAD(+) (ammonia route): step 1/1. Functionally, catalyzes the ATP-dependent amidation of deamido-NAD to form NAD. Uses ammonia as a nitrogen source. The chain is NH(3)-dependent NAD(+) synthetase from Thermotoga neapolitana (strain ATCC 49049 / DSM 4359 / NBRC 107923 / NS-E).